The chain runs to 266 residues: Type III pantothenate kinase (266 aa).

An ATP-binding site is contributed by 9–16 (DAGNSRIK). Residues tyrosine 96 and 103-106 (GSDR) contribute to the substrate site. Aspartate 105 serves as the catalytic Proton acceptor. Residue threonine 129 participates in ATP binding. Position 189 (threonine 189) interacts with substrate.

It belongs to the type III pantothenate kinase family. Homodimer. NH4(+) is required as a cofactor. K(+) serves as cofactor.

The protein resides in the cytoplasm. The enzyme catalyses (R)-pantothenate + ATP = (R)-4'-phosphopantothenate + ADP + H(+). It functions in the pathway cofactor biosynthesis; coenzyme A biosynthesis; CoA from (R)-pantothenate: step 1/5. Its function is as follows. Catalyzes the phosphorylation of pantothenate (Pan), the first step in CoA biosynthesis. This Burkholderia lata (strain ATCC 17760 / DSM 23089 / LMG 22485 / NCIMB 9086 / R18194 / 383) protein is Type III pantothenate kinase.